The chain runs to 1169 residues: Transcription-repair-coupling factor (1169 aa).

The 162-residue stretch at 634–795 (DMERARPMDR…MLGVRDLSVI (162 aa)) folds into the Helicase ATP-binding domain. ATP is bound at residue 647 to 654 (GDVGYGKT). The DEEQ box signature appears at 748-751 (DEEQ). The 162-residue stretch at 809–970 (VLEQNTNFIK…GFKIAMRDLN (162 aa)) folds into the Helicase C-terminal domain.

It in the N-terminal section; belongs to the UvrB family. In the C-terminal section; belongs to the helicase family. RecG subfamily.

The protein resides in the cytoplasm. Its function is as follows. Couples transcription and DNA repair by recognizing RNA polymerase (RNAP) stalled at DNA lesions. Mediates ATP-dependent release of RNAP and its truncated transcript from the DNA, and recruitment of nucleotide excision repair machinery to the damaged site. The chain is Transcription-repair-coupling factor from Staphylococcus epidermidis (strain ATCC 12228 / FDA PCI 1200).